The sequence spans 949 residues: ATPase 5, plasma membrane-type (949 aa).

N-acetylserine is present on S2. The Cytoplasmic segment spans residues 2–61 (SELDHIKNESVDLVRIPMEEVFEELKCTKQGLTANEASHRLDVFGPNKLEEKKESKLLKF). Residues 62–81 (LGFMWNPLSWVMEVAALMAI) form a helical membrane-spanning segment. Residues 82-93 (ALANGGGRPPDW) lie on the Extracellular side of the membrane. The helical transmembrane segment at 94–114 (QDFVGIVCLLLINSTISFIEE) threads the bilayer. Over 115 to 243 (NNAGNAAAAL…GHFQKVLTSI (129 aa)) the chain is Cytoplasmic. Residues 244–264 (GNFCICSIALGIIVELLVMYP) form a helical membrane-spanning segment. Residues 265-273 (IQRRRYRDG) lie on the Extracellular side of the membrane. The chain crosses the membrane as a helical span at residues 274–291 (IDNLLVLLIGGIPIAMPS). Residues 292-643 (VLSVTMATGS…TSRAIFQRMK (352 aa)) lie on the Cytoplasmic side of the membrane. Residue D329 is the 4-aspartylphosphate intermediate of the active site. 2 residues coordinate Mg(2+): D588 and D592. Residues 644–665 (NYTIYAVSITIRIVFGFMFIAL) traverse the membrane as a helical segment. Residues 666–670 (IWQFD) are Extracellular-facing. Residues 671–693 (FSPFMVLIIAILNDGTIMTISKD) form a helical membrane-spanning segment. The Cytoplasmic portion of the chain corresponds to 694 to 709 (RMKPSPQPDSWKLRDI). A helical membrane pass occupies residues 710 to 730 (FSTGVVLGGYQALMTVVFFWV). Residues 731–751 (MKDSDFFSNYFGVRPLSQRPE) are Extracellular-facing. A helical membrane pass occupies residues 752 to 772 (QMMAALYLQVSIISQALIFVT). Residues 773–784 (RSRSWSYAECPG) are Cytoplasmic-facing. A helical transmembrane segment spans residues 785–805 (LLLLGAFVIAQLVATFIAVYA). At 806–813 (NWSFARIE) the chain is on the extracellular side. The helical transmembrane segment at 814 to 834 (GAGWGWAGVIWLYSFLTYIPL) threads the bilayer. Over 835 to 949 (DLLKFGIRYV…IDTIQQHYTV (115 aa)) the chain is Cytoplasmic. T881 carries the phosphothreonine modification. Phosphoserine is present on residues S899 and S931. Residues 947–949 (YTV) are interaction with 14-3-3 proteins. T948 bears the Phosphothreonine mark.

Belongs to the cation transport ATPase (P-type) (TC 3.A.3) family. Type IIIA subfamily. As to quaternary structure, binds to 14-3-3 proteins. The binding is induced by phosphorylation of Thr-948. Binding to 14-3-3 proteins activates the H(+)-ATPase. Expressed in guard cells and leaves.

The protein resides in the membrane. The enzyme catalyses ATP + H2O + H(+)(in) = ADP + phosphate + 2 H(+)(out). Functionally, the plasma membrane H(+) ATPase of plants and fungi generates a proton gradient that drives the active transport of nutrients by H(+)-symport. The resulting external acidification and/or internal alkinization may mediate growth responses. The sequence is that of ATPase 5, plasma membrane-type (AHA5) from Arabidopsis thaliana (Mouse-ear cress).